A 315-amino-acid chain; its full sequence is Replication factor C small subunit (315 aa).

43-50 lines the ATP pocket; sequence GSPGVGKT.

The protein belongs to the activator 1 small subunits family. RfcS subfamily. As to quaternary structure, heteromultimer composed of small subunits (RfcS) and large subunits (RfcL).

Part of the RFC clamp loader complex which loads the PCNA sliding clamp onto DNA. The protein is Replication factor C small subunit of Methanococcus maripaludis (strain C5 / ATCC BAA-1333).